The sequence spans 468 residues: Glucose-dependent insulinotropic receptor (468 aa).

The Extracellular portion of the chain corresponds to 1 to 6 (MESSFS). A helical membrane pass occupies residues 7–27 (FGVILAVLTILIIAVNALVVV). Residues 28 to 37 (AMLLSIYKND) are Cytoplasmic-facing. The chain crosses the membrane as a helical span at residues 38–58 (GVGLCFTLNLAVADTLIGVAI). The Extracellular portion of the chain corresponds to 59-81 (SGLVTDQLSSSAQHTQKTLCSLR). Residues 82–102 (MAFVTSSAAASVLTVMLIAFD) traverse the membrane as a helical segment. The Cytoplasmic segment spans residues 103–125 (RYLAIKQPLRYFQIMNGLVAGGC). Residues 126–146 (IAGLWLISYLIGFLPLGVSIF) traverse the membrane as a helical segment. The Extracellular segment spans residues 147-164 (QQTTYHGPCTFFAVFHPR). A helical membrane pass occupies residues 165–185 (FVLTLSCAGFFPAVLLFVFFY). The Cytoplasmic portion of the chain corresponds to 186-226 (CDMLKIASVHSQHIRKMEHAGAMVGACRPPRPVNDFKAVRT). A helical membrane pass occupies residues 227-247 (VSVLIGSFTLSWSPFLITSIV). At 248–262 (QVACHKCCLYQVLEK) the chain is on the extracellular side. The chain crosses the membrane as a helical span at residues 263–283 (YLWLLGVGNSLLNPLIYAYWQ). Topologically, residues 284–468 (REVRQQLCHM…MSDPLRTCRG (185 aa)) are cytoplasmic.

The protein belongs to the G-protein coupled receptor 1 family. In terms of tissue distribution, expression restricted to the beta-cells of pancreatic islets.

The protein resides in the cell membrane. In terms of biological role, receptor for the endogenous fatty-acid ethanolamide oleoylethanolamide (OEA) and lysophosphatidylcholine (LPC). Functions as a glucose-dependent insulinotropic receptor. The activity of this receptor is mediated by G proteins which activate adenylate cyclase. Seems to act through a G(s) mediated pathway. In Rattus norvegicus (Rat), this protein is Glucose-dependent insulinotropic receptor (Gpr119).